Here is a 416-residue protein sequence, read N- to C-terminus: Lactose permease (416 aa).

Residues 1 to 13 lie on the Cytoplasmic side of the membrane; sequence MKLSELAPRERHN. The helical transmembrane segment at 14–34 threads the bilayer; that stretch reads FIYFMLFFFFYYFIMSAYFPF. The Periplasmic segment spans residues 35–50; the sequence is FPVWLAEVNHLTKTET. Residues 51–71 traverse the membrane as a helical segment; that stretch reads GIVFSCISLFAIIFQPVFGLI. Over 72 to 80 the chain is Cytoplasmic; the sequence is SDKLGLRKH. Residues 81–101 form a helical membrane-spanning segment; the sequence is LLWTITILLILFAPFFIFVFS. A topological domain (periplasmic) is located at residue proline 102. The chain crosses the membrane as a helical span at residues 103-123; sequence LLQMNIMAGALVGGVYLGIVF. The Cytoplasmic portion of the chain corresponds to 124-149; the sequence is SSRSGAVEAYIERVSRANRFEYGKVR. Helical transmembrane passes span 150-170 and 171-191; these read VSGCVGWALCASITGILFSID and PNITFWIASGFALILGVLLWV. The Cytoplasmic segment spans residues 192–223; the sequence is SKPESSNSAEVIDALGANRQAFSMRTAAELFR. The chain crosses the membrane as a helical span at residues 224 to 244; it reads MPRFWGFIIYVVGVASVYDVF. At 245–267 the chain is on the periplasmic side; the sequence is DQQFANFFKGFFSSPQRGTEVFG. The helical transmembrane segment at 268-288 threads the bilayer; that stretch reads FVTTGGELLNALIMFCAPAII. At 289-295 the chain is on the cytoplasmic side; that stretch reads NRIGAKN. 2 helical membrane passes run 296–316 and 317–337; these read ALLIAGLIMSVRILGSSFATS and AVEVIILKMLHMFEIPFLLVG. At 338-353 the chain is on the cytoplasmic side; the sequence is TFKYISSAFKGKLSAT. A helical membrane pass occupies residues 354–374; sequence LFLIGFNLSKQLSSVVLSAWV. Residues 375–384 lie on the Periplasmic side of the membrane; it reads GRMYDTVGFH. Residues 385–405 traverse the membrane as a helical segment; that stretch reads QAYLILGCITLSFTVISLFTL. Topologically, residues 406-416 are cytoplasmic; that stretch reads KGSKTLLPATA.

The protein belongs to the major facilitator superfamily. Oligosaccharide:H(+) symporter (OHS) (TC 2.A.1.5) family.

It localises to the cell inner membrane. The catalysed reaction is lactose(in) + H(+)(in) = lactose(out) + H(+)(out). In terms of biological role, responsible for transport of beta-galactosides into the cell, with the concomitant import of a proton (symport system). The chain is Lactose permease (lacY) from Klebsiella oxytoca.